A 353-amino-acid chain; its full sequence is GDSL esterase/lipase At5g03810 (353 aa).

Positions 1–24 (MKMFITMSMCLSVIACFYAGVGTG) are cleaved as a signal peptide. S37 serves as the catalytic Nucleophile. N-linked (GlcNAc...) asparagine glycans are attached at residues N100, N255, N256, N260, and N320. Catalysis depends on residues D328 and H331.

The protein belongs to the 'GDSL' lipolytic enzyme family.

It localises to the secreted. This Arabidopsis thaliana (Mouse-ear cress) protein is GDSL esterase/lipase At5g03810.